The following is a 236-amino-acid chain: UPF0257 lipoprotein YnfC (236 aa).

The N-terminal stretch at 1-16 is a signal peptide; the sequence is MKYKLLPCLLAILLTG. Cysteine 17 carries N-palmitoyl cysteine lipidation. Residue cysteine 17 is the site of S-diacylglycerol cysteine attachment.

This sequence belongs to the UPF0257 family.

The protein localises to the cell membrane. This chain is UPF0257 lipoprotein YnfC, found in Escherichia coli O127:H6 (strain E2348/69 / EPEC).